Here is a 122-residue protein sequence, read N- to C-terminus: Large ribosomal subunit protein bL12 (122 aa).

This sequence belongs to the bacterial ribosomal protein bL12 family. In terms of assembly, homodimer. Part of the ribosomal stalk of the 50S ribosomal subunit. Forms a multimeric L10(L12)X complex, where L10 forms an elongated spine to which 2 to 4 L12 dimers bind in a sequential fashion. Binds GTP-bound translation factors.

Functionally, forms part of the ribosomal stalk which helps the ribosome interact with GTP-bound translation factors. Is thus essential for accurate translation. The chain is Large ribosomal subunit protein bL12 from Staphylococcus aureus (strain Mu50 / ATCC 700699).